Reading from the N-terminus, the 84-residue chain is MAHKKGGGSTKNGRDSNPKYLGVKAAGGSTVAAGTIILRQRGTVIKPGVNAGIGRDHTIFALEDGVVTFRNGRNNKKQVDIIAP.

The segment at 1–21 is disordered; that stretch reads MAHKKGGGSTKNGRDSNPKYL.

The protein belongs to the bacterial ribosomal protein bL27 family.

The chain is Large ribosomal subunit protein bL27 from Chlorobium phaeovibrioides (strain DSM 265 / 1930) (Prosthecochloris vibrioformis (strain DSM 265)).